Here is a 283-residue protein sequence, read N- to C-terminus: Gap junction beta-1 protein (283 aa).

The Cytoplasmic segment spans residues 1-22; the sequence is MNWTGLYTLLSGVNRHSTAIGR. Residues 23–45 form a helical membrane-spanning segment; the sequence is VWLSVIFIFRIMVLVVAAESVWG. At 46–75 the chain is on the extracellular side; it reads DEKSSFICNTLQPGCNSVCYDQFFPISHVR. Residues 76–95 form a helical membrane-spanning segment; sequence LWSLQLILVSTPALLVAMHV. Residues 96 to 130 are Cytoplasmic-facing; it reads AHQQHIEKKMLRLEGHGDPLHLEEVKRHKVHISGT. The chain crosses the membrane as a helical span at residues 131–153; it reads LWWTYVISVVFRLLFEAVFMYVF. Residues 154–191 are Extracellular-facing; sequence YLLYPGYAMVRLVKCDVYPCPNTVDCFVSRPTEKTVFT. The chain crosses the membrane as a helical span at residues 192–214; it reads VFMLAASGICIILNVAEVVYLII. Topologically, residues 215-283 are cytoplasmic; that stretch reads RACARRAQRR…AEKSDRCSAC (69 aa). 4 positions are modified to phosphoserine: Ser-233, Ser-258, Ser-266, and Ser-277.

Belongs to the connexin family. Beta-type (group I) subfamily. A connexon is composed of a hexamer of connexins. Interacts with CNST.

The protein localises to the cell membrane. It localises to the cell junction. Its subcellular location is the gap junction. One gap junction consists of a cluster of closely packed pairs of transmembrane channels, the connexons, through which materials of low MW diffuse from one cell to a neighboring cell. This Homo sapiens (Human) protein is Gap junction beta-1 protein (GJB1).